Consider the following 1318-residue polypeptide: MEDRGRETQMPVARYGGPFIMVRLFGQDGEANIQEQRLYELLSDPRSALGLDPGPLIAENLLLVALRGTNNDPRPQRQERARELALVGILLGNGEQGEHLGTESALEASGNNYVYAYGPDWMARPSTWSAEIQQFLRLLGATYVLRVEMGRQFGFEVHRSRPSFRQFQAINHLVLFDNALRKYDSGQVAAGFQRALLVAGPETADTRPDLRKLNEWVFGGRAAGGRQLADELKIVSALRDTYSGHLVLQPTETLDTWKVLSRDTRTAHSLEHGFIHAAGTIQANCPQLFMRRQHPGLFPFVSAIASSLGWYYQTATGPGADARAAARRQQAFQTRAAAECHAKSGVPVVAGFYRTINATLKGGEGLQPTMFNGELGAIKHQALDTVRYDYGHYLIMLGPFQPWSGLTAPPCPYAESSWAQAAVQTALELFSALYPAPCISGYARPPGPSAVIEHLGSLVPKGGLLLFLSHLPDDVKDGLGEMGPARATGPGMQQFVSSYFLNPACSNVFITVRQRGEKINGRTVLQALGRACDMAGCQHYVLGSTVPLGGLNFVNDLASPVSTAEMMDDFSPFFTVEFPPIQEEGARSPVPLDVDESMDISPSYELPWLSLESCLTSILSHPTVGSKEHLVRHTDRVSGGRVAQQPGVGPLDLPLADYAFVAHSQVWTRPGGAPPLPYRTWDRMTEKLLVSAKPGGENVKVSGTVITLGEQGYKVSLDLREGTRLAMAEALLNAAFAPILDPEDVLLTLHLHLDPRRADNSVVMEAMTAASDYARGLGVKLTFGSASCPETGSSASSFMTVVASVSAPGEFSGPLITPVLQKTGSLLIAVRCGDGKIQGGSLFEQLFSDVATTPRAPEALSLKNLFRAVQQLVKSGIVLSGHDISDGGLVTCLVEMALAGQRGVTITMPVASDYLPEMFAEHPGLVFEVEERSVGEVLQTLRSMNMYPAVLGRVGEQGPDQMFEVQHGPETVLRQSLRLLLGTWSSFASEQYECLRPDRINRSMHVSDYGYNEALAVSPLTGKNLSPRRLVTEPDPRCQVAVLCAPGTRGHESLLAAFTNAGCLCRRVFFREVRDNTFLDKYVGLAIGGVHGARDSALAGRATVALINRSPALRDAILKFLNRPDTFSVALGELGVQVLAGLGAVGSTDNPPAPGVEVNVQRSPLILAPNASGMFESRWLNISIPATTSSVMLRGLRGCVLPCWVQGSCLGLQFTNLGMPYVLQNAHQIACHFHSNGTDAWRFAMNYPRNPTEQGNIAGLCSRDGRHLALLCDPSLCTDFWQWEHIPPAFGHPTGCSPWTLMFQAAHLWSLRHGRPSE.

Belongs to the herpesviridae MTP family. As to quaternary structure, interacts with host DAXX; this interaction disrupts the chromatin remodeling complex ATRX:DAXX and thus allows viral transcription. Interacts with host SMC6; this interaction targets SMC5-SMC6 complex for proteasomal degradation.

The protein localises to the virion tegument. Its subcellular location is the host nucleus. Functionally, tegument protein that plays a role in the inhibition of host intrinsic defenses to promote viral early gene activation. Interacts with host DAXX and thereby disrupts the complex between DAXX and ATRX. Suppresses the DAXX-ATRX dependent deposition of histone H3.3 on viral chromatin allowing viral transcription. Targets also host SMC5/6 for proteasomal degradation in a CUL7 and calpain-dependent manner to support nuclear membrane-less replication compartment formation and lytic virus replication. The protein is Major tegument protein of Homo sapiens (Human).